The following is a 481-amino-acid chain: ATP synthase subunit beta, chloroplastic (481 aa).

Glycine 162–threonine 169 is a binding site for ATP.

It belongs to the ATPase alpha/beta chains family. F-type ATPases have 2 components, F(1) - the catalytic core - and F(0) - the membrane proton channel. F(1) has five subunits: alpha(3), beta(3), gamma(1), delta(1), epsilon(1). F(0) has four main subunits: a(1), b(1), b'(1) and c(10-14). The alpha and beta chains form an alternating ring which encloses part of the gamma chain. F(1) is attached to F(0) by a central stalk formed by the gamma and epsilon chains, while a peripheral stalk is formed by the delta, b and b' chains.

The protein localises to the plastid. Its subcellular location is the chloroplast thylakoid membrane. The catalysed reaction is ATP + H2O + 4 H(+)(in) = ADP + phosphate + 5 H(+)(out). Functionally, f(1)F(0) ATP synthase produces ATP from ADP in the presence of a proton or sodium gradient. F-type ATPases consist of two structural domains, F(1) containing the extramembraneous catalytic core and F(0) containing the membrane proton channel, linked together by a central stalk and a peripheral stalk. During catalysis, ATP synthesis in the catalytic domain of F(1) is coupled via a rotary mechanism of the central stalk subunits to proton translocation. Its function is as follows. Produces ATP from ADP in the presence of a proton gradient across the membrane. The catalytic sites are hosted primarily by the beta subunits. The protein is ATP synthase subunit beta, chloroplastic of Chlamydomonas reinhardtii (Chlamydomonas smithii).